The following is a 306-amino-acid chain: Phenylcoumaran benzylic ether reductase IRL1 (306 aa).

NADP(+) is bound by residues 10-16 (GATGYIG), Arg-35, and Lys-44. Residue Lys-132 is the Proton acceptor of the active site. Position 136 (Arg-136) interacts with NADP(+).

This sequence belongs to the NmrA-type oxidoreductase family. Isoflavone reductase subfamily. In terms of tissue distribution, highly expressed in sclerotesta. Expressed in roots, and two-to-four year stems.

It catalyses the reaction (-)-dehydrodiconiferyl alcohol + NADPH + H(+) = (S)-isodihydrodehydrodiconiferyl alcohol + NADP(+). The catalysed reaction is (+)-dehydrodiconiferyl alcohol + NADPH + H(+) = (R)-isodihydrodehydrodiconiferyl alcohol + NADP(+). The enzyme catalyses (2R,3S)-dihydrodehydrodiconiferyl alcohol + NADPH + H(+) = (S)-tetrahydrodehydrodiconiferyl alcohol + NADP(+). It carries out the reaction (2S,3R)-dihydrodehydrodiconiferyl alcohol + NADPH + H(+) = (R)-tetrahydrodehydrodiconiferyl alcohol + NADP(+). Functionally, oxidoreductase involved in lignan biosynthesis. Catalyzes the NADPH-dependent reduction of phenylcoumaran benzylic ethers. Converts dehydrodiconiferyl alcohol (DDC) to isodihydrodehydrodiconiferyl alcohol (IDDDC), and dihydrodehydrodiconiferyl alcohol (DDDC) to tetrahydrodehydrodiconiferyl alcohol (TDDC). May regulate changes in lignin content and accumulation of flavonoids. The polypeptide is Phenylcoumaran benzylic ether reductase IRL1 (Ginkgo biloba (Ginkgo)).